The sequence spans 658 residues: Threonine--tRNA ligase (658 aa).

A TGS domain is found at 1-64 (MSNTVSLQFP…GASGKVEIIT (64 aa)). Residues 246 to 548 (DHRRLGREMD…LIENFAGHMP (303 aa)) form a catalytic region. The Zn(2+) site is built by Cys-343, His-394, and His-525.

It belongs to the class-II aminoacyl-tRNA synthetase family. In terms of assembly, homodimer. Zn(2+) is required as a cofactor.

It localises to the cytoplasm. It catalyses the reaction tRNA(Thr) + L-threonine + ATP = L-threonyl-tRNA(Thr) + AMP + diphosphate + H(+). Its function is as follows. Catalyzes the attachment of threonine to tRNA(Thr) in a two-step reaction: L-threonine is first activated by ATP to form Thr-AMP and then transferred to the acceptor end of tRNA(Thr). Also edits incorrectly charged L-seryl-tRNA(Thr). In Brucella melitensis biotype 1 (strain ATCC 23456 / CCUG 17765 / NCTC 10094 / 16M), this protein is Threonine--tRNA ligase.